The following is a 463-amino-acid chain: Peptidylprolyl isomerase cyp7 (463 aa).

The PPIase cyclophilin-type domain occupies 11–166 (ATGTVILKTT…FPPKIISTEV (156 aa)). A disordered region spans residues 224-275 (VKKPLRQKTPVSRSSDTTTELSKDLISSSSSIHSTYSSAQTGLTSAKVSSDE). Over residues 232–243 (TPVSRSSDTTTE) the composition is skewed to polar residues. The span at 250 to 261 (SSSSSIHSTYSS) shows a compositional bias: low complexity. Residues 262 to 271 (AQTGLTSAKV) are compositionally biased toward polar residues.

The protein belongs to the cyclophilin-type PPIase family. CWC27 subfamily. In terms of assembly, belongs to the 40S cdc5-associated complex (or cwf complex), a spliceosome sub-complex reminiscent of a late-stage spliceosome composed of the U2, U5 and U6 snRNAs and at least brr2, cdc5, cwf2/prp3, cwf3/syf1, cwf4/syf3, cwf5/ecm2, spp42/cwf6, cwf7/spf27, cwf8, cwf9, cwf10, cwf11, cwf12, prp45/cwf13, cwf14, cwf15, cwf16, cwf17, cwf18, cwf19, cwf20, cwf21, cwf22, cwf23, cwf24, cwf25, cwf26, cyp7/cwf27, cwf28, cwf29/ist3, lea1, msl1, prp5/cwf1, prp10, prp12/sap130, prp17, prp22, sap61, sap62, sap114, sap145, slu7, smb1, smd1, smd3, smf1, smg1 and syf2.

It localises to the cytoplasm. Its subcellular location is the nucleus. It carries out the reaction [protein]-peptidylproline (omega=180) = [protein]-peptidylproline (omega=0). Functionally, PPIases accelerate the folding of proteins. Catalyzes the cis-trans isomerization of proline imidic peptide bonds in oligopeptides. Involved in pre-mRNA splicing. The chain is Peptidylprolyl isomerase cyp7 (cyp7) from Schizosaccharomyces pombe (strain 972 / ATCC 24843) (Fission yeast).